Consider the following 611-residue polypeptide: Creatine transporter (611 aa).

The chain crosses the membrane as a helical span at residues 45–65 (FIMSCVGFAVGLGNVWRFPYL). Topologically, residues 66–71 (CYKNGG) are extracellular. A helical transmembrane segment spans residues 72–92 (GVFLIPYLLVAVFGGIPIFFL). Topologically, residues 93 to 122 (EISLGQFMKAGGINAWNIAPLFKGLGYASM) are cytoplasmic. A helical transmembrane segment spans residues 123 to 143 (VIVFFCNTYYILVLTWSSFYL). Residues 144 to 207 (VQSFSSPLPW…LSSGLGDVGE (64 aa)) lie on the Extracellular side of the membrane. Asn157 and Asn171 each carry an N-linked (GlcNAc...) asparagine glycan. The chain crosses the membrane as a helical span at residues 208–228 (IGWELTLCLTATWMLVYFCIW). Residues 229 to 246 (KGVKTSGKVVYVTATFPY) lie on the Cytoplasmic side of the membrane. A helical membrane pass occupies residues 247–267 (IILVILLVRGVTLHGAVQGIV). At 268-281 (YYLQPDWGKLGEAQ) the chain is on the extracellular side. Residues 282 to 302 (VWIDAGTQIFFSYAIGLGTLT) form a helical membrane-spanning segment. At 303–318 (ALGSYNQLHNDCYKDA) the chain is on the cytoplasmic side. Residues 319–339 (FILSLVNSATSFFAGLVVFSI) form a helical membrane-spanning segment. Over 340–371 (LGFMAVEEGVDISVVAESGPGLAFIAYPKAVT) the chain is Extracellular. Residues 372–392 (LMPFPQVWAVLFFIMLLCLGL) traverse the membrane as a helical segment. The Cytoplasmic segment spans residues 393–421 (GSQFVGVEGFVTAILDLWPSKFSFRYLRE). A helical transmembrane segment spans residues 422-442 (VVVAMVICLSFLIDLSMITEG). The Extracellular portion of the chain corresponds to 443–456 (GMYIFQIFDYYSAS). The chain crosses the membrane as a helical span at residues 457 to 477 (GTTLLWTAFWECVAVAWVYGG). At 478 to 497 (DRYLDDLAWMLGYRPWALVK) the chain is on the cytoplasmic side. Residues 498–518 (WCWSVITPLVCMGIFTFHLVN) traverse the membrane as a helical segment. Topologically, residues 519–537 (YKPLTYNKTYTYPWWGEAI) are extracellular. Asn525 carries N-linked (GlcNAc...) asparagine glycosylation. A helical membrane pass occupies residues 538–558 (GWCLALASMLCVPTTVLYSLS). Residues 559 to 611 (RGRGSLKERWRKLTTPVWASHHLAYKMAGAKINQPCEGVVSCEEKVVIFESVL) are Cytoplasmic-facing.

It belongs to the sodium:neurotransmitter symporter (SNF) (TC 2.A.22) family.

The protein localises to the membrane. In terms of biological role, required for the uptake of creatine. This chain is Creatine transporter, found in Torpedo marmorata (Marbled electric ray).